We begin with the raw amino-acid sequence, 772 residues long: Transducin-like enhancer protein 4 (772 aa).

2 disordered regions span residues Met-1–Pro-24 and Leu-183–Leu-359. The q domain stretch occupies residues Met-1–Gln-137. Positions His-138–Ser-205 are GP domain. A compositionally biased stretch (basic and acidic residues) spans Pro-184–Ile-203. The span at Lys-204–Ser-213 shows a compositional bias: low complexity. The tract at residues Ser-206 to Pro-275 is ccN domain. Composition is skewed to basic and acidic residues over residues Ala-216–Asp-253 and Ser-274–Ala-290. The SP domain stretch occupies residues Arg-276–Val-452. A compositionally biased stretch (low complexity) spans Pro-291–Ser-306. Residues Lys-307 to Lys-316 are compositionally biased toward basic and acidic residues. Over residues Thr-318 to Pro-329 the composition is skewed to polar residues. WD repeat units lie at residues Asn-484–Pro-522, Asn-530–Lys-569, Ser-574–Gln-613, Gly-616–Gln-655, Asp-657–Leu-696, Leu-698–Gln-737, and Lys-739–Tyr-772.

Belongs to the WD repeat Groucho/TLE family. In terms of assembly, interacts with tcf7, tcf7l1, ripply2.2/bowline, dscr6/ripply3 and foxd3. Associates with tbx6 in the presence of ripply2.2/bowline. Interacts with EFNB1 through the SP domain. Ubiquitinated by XIAP/BIRC4. Expressed at high levels in the spleen and ovary.

The protein resides in the nucleus. Functionally, transcriptional corepressor. Functions with ripply2.2/bowline to down regulate transcription of tbx6-dependent gene expression. Represses transcription of siamois and nodal3. In Xenopus laevis (African clawed frog), this protein is Transducin-like enhancer protein 4 (tle4).